The chain runs to 968 residues: RNA polymerase-associated protein RapA (968 aa).

The 171-residue stretch at 164–334 (DVGRRHAPRV…FARLRLLDPN (171 aa)) folds into the Helicase ATP-binding domain. 177–184 (DEVGLGKT) is an ATP binding site. Residues 280-283 (DEAH) carry the DEAH box motif. A Helicase C-terminal domain is found at 490–685 (RVEWLMGYLT…ALKAQLEQGR (196 aa)).

This sequence belongs to the SNF2/RAD54 helicase family. RapA subfamily. Interacts with the RNAP. Has a higher affinity for the core RNAP than for the holoenzyme. Its ATPase activity is stimulated by binding to RNAP.

Its function is as follows. Transcription regulator that activates transcription by stimulating RNA polymerase (RNAP) recycling in case of stress conditions such as supercoiled DNA or high salt concentrations. Probably acts by releasing the RNAP, when it is trapped or immobilized on tightly supercoiled DNA. Does not activate transcription on linear DNA. Probably not involved in DNA repair. This is RNA polymerase-associated protein RapA from Salmonella schwarzengrund (strain CVM19633).